The following is a 560-amino-acid chain: Factor VII-activating protease (560 aa).

An N-terminal signal peptide occupies residues 1-23 (MFARMSDLHVLLLMALVGKTACG). A glycan (N-linked (GlcNAc...) asparagine) is linked at Asn54. EGF-like domains are found at residues 73 to 109 (QADP…NKCQ), 111 to 148 (VQNT…PSCS), and 150 to 188 (VVPV…KFCE). Disulfide bonds link Cys77–Cys88, Cys82–Cys97, Cys99–Cys108, Cys115–Cys125, Cys120–Cys136, Cys138–Cys147, Cys154–Cys165, Cys159–Cys176, Cys178–Cys187, Cys194–Cys276, Cys215–Cys257, Cys246–Cys271, Cys301–Cys435, Cys347–Cys363, Cys355–Cys424, Cys447–Cys515, Cys477–Cys493, and Cys505–Cys533. The Kringle domain maps to 193–276 (DCYVGDGYSY…KWEYCDVSAC (84 aa)). Residue Asn207 is glycosylated (N-linked (GlcNAc...) asparagine). Residues 314–555 (IYGGFKSTAG…FLNWIKATIK (242 aa)) enclose the Peptidase S1 domain. Catalysis depends on charge relay system residues His362 and Asp411. The Charge relay system role is filled by Ser509.

The protein belongs to the peptidase S1 family. In terms of assembly, heterodimer; disulfide-linked. Heterodimer of a 50 kDa heavy and a 27 kDa light chain linked by a disulfide bond. Proteolytic cleavage at Gly-23 or Met-27 can give rise to the 50 kDa heavy chain (HC) and cleavage at Arg-313 or Lys-319 can give rise to the 27 kDa light chain (LC). The HC can undergo further proteolytic cleavage giving rise to a 26 kDa fragment. The LC can undergo further proteolytic cleavage at Arg-313 leading to a 17-kDa fragment and at Arg-480 leading to a 8-kDa fragment. In terms of tissue distribution, ubiquitously expressed.

The protein resides in the secreted. Its function is as follows. Cleaves the alpha-chain at multiple sites and the beta-chain between 'Lys-53' and 'Lys-54' but not the gamma-chain of fibrinogen and therefore does not initiate the formation of the fibrin clot and does not cause the fibrinolysis directly. It does not cleave (activate) prothrombin and plasminogen but converts the inactive single chain urinary plasminogen activator (pro-urokinase) to the active two chain form. Activates coagulation factor VII. May function as a tumor suppressor negatively regulating cell proliferation and cell migration. This Homo sapiens (Human) protein is Factor VII-activating protease.